The primary structure comprises 526 residues: Probable 1,4-alpha-glucan branching enzyme MT3115 (526 aa).

Glutamate 205 acts as the Nucleophile in catalysis. 2 residues coordinate substrate: arginine 251 and glycine 268. Aspartate 344 acts as the Proton donor in catalysis. Substrate-binding residues include tryptophan 396 and aspartate 462.

Belongs to the glycosyl hydrolase 57 family.

The enzyme catalyses Transfers a segment of a (1-&gt;4)-alpha-D-glucan chain to a primary hydroxy group in a similar glucan chain.. Its function is as follows. Catalyzes the formation of branch points in alpha-glucans by cleavage of an alpha-1,4 glycosidic bond and subsequent transfer of the cleaved-off oligosaccharide to a new alpha-1,6 position. Is probably involved in the biosynthesis of 6-O-methylglucosyl lipopolysaccharides (MGLP). The protein is Probable 1,4-alpha-glucan branching enzyme MT3115 of Mycobacterium tuberculosis (strain CDC 1551 / Oshkosh).